Reading from the N-terminus, the 83-residue chain is Acyl carrier protein MmaB (83 aa).

A Carrier domain is found at 3-83; sequence DPVRQRILLA…LSQSELESPT (81 aa). Ser-39 is modified (O-(pantetheine 4'-phosphoryl)serine).

This sequence belongs to the acyl carrier protein (ACP) family. It depends on pantetheine 4'-phosphate as a cofactor.

Its pathway is lipid metabolism; fatty acid metabolism. Functionally, acyl-carrier protein (ACP) involved in the biosynthesis of a unique class of isonitrile lipopeptides (INLPs) that seem to play a role in metal acquisition in M.marinum. Is the dedicated ACP for the loading of activated acyl groups catalyzed by MmaC. The sequence is that of Acyl carrier protein MmaB from Mycobacterium marinum (strain ATCC BAA-535 / M).